The sequence spans 305 residues: HPr kinase/phosphorylase (305 aa).

Residues His136 and Lys157 contribute to the active site. 151–158 (GESGIGKS) is an ATP binding site. Ser158 serves as a coordination point for Mg(2+). Asp175 (proton acceptor; for phosphorylation activity. Proton donor; for dephosphorylation activity) is an active-site residue. The interval 198–207 (LEVRGLGIID) is important for the catalytic mechanism of both phosphorylation and dephosphorylation. Glu199 is a binding site for Mg(2+). Arg240 is a catalytic residue. The segment at 261-266 (PIRPGR) is important for the catalytic mechanism of dephosphorylation.

It belongs to the HPrK/P family. As to quaternary structure, homohexamer. Mg(2+) serves as cofactor.

The catalysed reaction is [HPr protein]-L-serine + ATP = [HPr protein]-O-phospho-L-serine + ADP + H(+). The enzyme catalyses [HPr protein]-O-phospho-L-serine + phosphate + H(+) = [HPr protein]-L-serine + diphosphate. In terms of biological role, catalyzes the ATP- as well as the pyrophosphate-dependent phosphorylation of a specific serine residue in HPr, a phosphocarrier protein of the phosphoenolpyruvate-dependent sugar phosphotransferase system (PTS). HprK/P also catalyzes the pyrophosphate-producing, inorganic phosphate-dependent dephosphorylation (phosphorolysis) of seryl-phosphorylated HPr (P-Ser-HPr). The two antagonistic activities of HprK/P are regulated by several intracellular metabolites, which change their concentration in response to the absence or presence of rapidly metabolisable carbon sources (glucose, fructose, etc.) in the growth medium. Therefore, by controlling the phosphorylation state of HPr, HPrK/P is a sensor enzyme that plays a major role in the regulation of carbon metabolism and sugar transport: it mediates carbon catabolite repression (CCR), and regulates PTS-catalyzed carbohydrate uptake and inducer exclusion. This Clostridium tetani (strain Massachusetts / E88) protein is HPr kinase/phosphorylase.